A 44-amino-acid polypeptide reads, in one-letter code: uncharacterized protein (44 aa).

Positions 1–28 are cleaved as a signal peptide; the sequence is MLRDLGRRVAIAAILSGIILGGMSISLA.

This is an uncharacterized protein from Bacillus subtilis (strain 168).